Consider the following 481-residue polypeptide: Aspartyl/glutamyl-tRNA(Asn/Gln) amidotransferase subunit B (481 aa).

The protein belongs to the GatB/GatE family. GatB subfamily. In terms of assembly, heterotrimer of A, B and C subunits.

It catalyses the reaction L-glutamyl-tRNA(Gln) + L-glutamine + ATP + H2O = L-glutaminyl-tRNA(Gln) + L-glutamate + ADP + phosphate + H(+). It carries out the reaction L-aspartyl-tRNA(Asn) + L-glutamine + ATP + H2O = L-asparaginyl-tRNA(Asn) + L-glutamate + ADP + phosphate + 2 H(+). Functionally, allows the formation of correctly charged Asn-tRNA(Asn) or Gln-tRNA(Gln) through the transamidation of misacylated Asp-tRNA(Asn) or Glu-tRNA(Gln) in organisms which lack either or both of asparaginyl-tRNA or glutaminyl-tRNA synthetases. The reaction takes place in the presence of glutamine and ATP through an activated phospho-Asp-tRNA(Asn) or phospho-Glu-tRNA(Gln). This chain is Aspartyl/glutamyl-tRNA(Asn/Gln) amidotransferase subunit B, found in Pseudomonas fluorescens (strain Pf0-1).